The sequence spans 489 residues: CUGBP Elav-like family member 1-B (489 aa).

3 RRM domains span residues 16-99 (IKMF…PADS), 108-188 (RKLF…FADT), and 404-482 (ANLF…LKRS).

The protein belongs to the CELF/BRUNOL family. As to quaternary structure, oligomer. Oligomerization is required for RNA-binding and EDEN-dependent deadenylation. Phosphorylated during oocyte maturation and dephosphorylated following egg activation. Dephosphorylation is calcium dependent and correlates with the increase in the activity of EDEN-dependent deadenylation.

It is found in the nucleus. It localises to the cytoplasm. RNA-binding protein implicated in the regulation of several post-transcriptional events. May be involved in pre-mRNA alternative splicing, mRNA translation activation and stability. Mediates the rapid and sequence-specific cytoplasmic deadenylation of EDEN-containing maternal mRNAs following fertilization. Binds to AU-rich sequences (AREs) of jun mRNA. Binds to the embryonic deadenylation element (EDEN) motif localized in the 3'-UTR of maternal mRNAs. Binds to RNA containing several repeats of the consensus sequence 5'-UGU-3'. EDEN-dependent deadenylation is enhanced by the presence of an additional cis element composed of three AUU repeats. The sequence is that of CUGBP Elav-like family member 1-B (cugbp1-b) from Xenopus laevis (African clawed frog).